A 316-amino-acid chain; its full sequence is Serpentine receptor class gamma-4 (316 aa).

7 consecutive transmembrane segments (helical) span residues 21–41, 50–70, 99–121, 140–160, 188–208, 229–249, and 258–278; these read FVYL…IWGT, SFFT…FLDV, IVYP…LSIN, MKKV…NVII, FQII…SITL, TAWI…FAFF, and IFYI…PIVM.

It belongs to the nematode receptor-like protein srg family.

The protein resides in the membrane. This is Serpentine receptor class gamma-4 (srg-4) from Caenorhabditis elegans.